Reading from the N-terminus, the 233-residue chain is Ribonuclease 3 (233 aa).

Positions Leu9–Gly136 constitute an RNase III domain. Glu49 contacts Mg(2+). Residue Asp53 is part of the active site. 2 residues coordinate Mg(2+): Asp122 and Glu125. Glu125 is an active-site residue. Residues Asp162–Val231 enclose the DRBM domain.

Belongs to the ribonuclease III family. Homodimer. Mg(2+) is required as a cofactor.

The protein resides in the cytoplasm. It catalyses the reaction Endonucleolytic cleavage to 5'-phosphomonoester.. Digests double-stranded RNA. Involved in the processing of primary rRNA transcript to yield the immediate precursors to the large and small rRNAs (23S and 16S). Processes some mRNAs, and tRNAs when they are encoded in the rRNA operon. Processes pre-crRNA and tracrRNA of type II CRISPR loci if present in the organism. The sequence is that of Ribonuclease 3 from Moorella thermoacetica (strain ATCC 39073 / JCM 9320).